The following is a 358-amino-acid chain: 4-hydroxybenzoate polyprenyltransferase, mitochondrial (358 aa).

A mitochondrion-targeting transit peptide spans 1 to 20 (MIIKPIASPARYFLRTPSWS). The next 7 helical transmembrane spans lie at 76–96 (TGTYLLYSPCTWSILMAAYAY), 107–127 (LALFGVGSFLMRSAGCVINDL), 154–174 (AISLLSVQLTASLGILLQLNP), 202–222 (VVLGLTFGYGAVMGWPALAGE), 229–249 (VVAPLYLSTISWIVLYDTIYA), 275–295 (VLCGLAALQIATLATAGIMNG), and 336–356 (NTGYLVAAAIALDWLAKSFIY).

Belongs to the UbiA prenyltransferase family. Mg(2+) serves as cofactor.

Its subcellular location is the mitochondrion. It localises to the mitochondrion inner membrane. It carries out the reaction an all-trans-polyprenyl diphosphate + 4-hydroxybenzoate = a 4-hydroxy-3-(all-trans-polyprenyl)benzoate + diphosphate. It participates in cofactor biosynthesis; ubiquinone biosynthesis. Its function is as follows. Catalyzes the prenylation of para-hydroxybenzoate (PHB) with an all-trans polyprenyl group. Mediates the second step in the final reaction sequence of coenzyme Q (CoQ) biosynthesis, which is the condensation of the polyisoprenoid side chain with PHB, generating the first membrane-bound Q intermediate. This Schizosaccharomyces pombe (strain 972 / ATCC 24843) (Fission yeast) protein is 4-hydroxybenzoate polyprenyltransferase, mitochondrial.